The chain runs to 206 residues: NDYCKIKCSSGVHTVCQYGESTKPSKNCAGKVIKSVGPTEEEKKLIVEEHNRFRQKVAQGLETRGNPGPQPAASNMNNLVWNDEQAKIAQVWASQCQILVHDKCRNTEKYQVGQNIAYAGSSNHFPSVTKLIQLWENEVKDFNYNTGITNKNFGKVGHYTQMVWGNTKEVGCGSLKYVEKNMKIHYLICNYGPAGNYLGQPIYTKK.

Disulfide bonds link Cys4–Cys16, Cys8–Cys104, Cys28–Cys96, and Cys172–Cys189. The region spanning Glu48–Tyr191 is the SCP domain.

This sequence belongs to the CRISP family. Venom allergen 5-like subfamily. In terms of tissue distribution, expressed by the venom gland.

It localises to the secreted. The sequence is that of Venom allergen 5 from Polistes gallicus (Paper wasp).